The primary structure comprises 207 residues: Putative 3-methyladenine DNA glycosylase (207 aa).

The protein belongs to the DNA glycosylase MPG family.

This is Putative 3-methyladenine DNA glycosylase from Burkholderia orbicola (strain MC0-3).